The sequence spans 162 residues: NADH-quinone oxidoreductase subunit I (162 aa).

4Fe-4S ferredoxin-type domains lie at 53-83 (LRRY…IESD) and 93-122 (TRYD…ETHI). The [4Fe-4S] cluster site is built by C63, C66, C69, C73, C102, C105, C108, and C112.

The protein belongs to the complex I 23 kDa subunit family. In terms of assembly, NDH-1 is composed of 14 different subunits. Subunits NuoA, H, J, K, L, M, N constitute the membrane sector of the complex. The cofactor is [4Fe-4S] cluster.

Its subcellular location is the cell inner membrane. It catalyses the reaction a quinone + NADH + 5 H(+)(in) = a quinol + NAD(+) + 4 H(+)(out). NDH-1 shuttles electrons from NADH, via FMN and iron-sulfur (Fe-S) centers, to quinones in the respiratory chain. The immediate electron acceptor for the enzyme in this species is believed to be ubiquinone. Couples the redox reaction to proton translocation (for every two electrons transferred, four hydrogen ions are translocated across the cytoplasmic membrane), and thus conserves the redox energy in a proton gradient. This chain is NADH-quinone oxidoreductase subunit I, found in Bordetella avium (strain 197N).